We begin with the raw amino-acid sequence, 88 residues long: Alpha-latrotoxin associated low molecular weight protein 2 (88 aa).

Residues 1–19 (MLKLICIAFLVTVLTLVAG) form the signal peptide. 3 cysteine pairs are disulfide-bonded: cysteine 30-cysteine 66, cysteine 46-cysteine 62, and cysteine 49-cysteine 75.

It belongs to the arthropod CHH/MIH/GIH/VIH hormone family. In terms of tissue distribution, expressed by the venom gland.

It is found in the secreted. Functionally, may increase the toxicity of alpha-latrotoxin and/or other venom components. Is non-toxic to mice and to the cockroach Periplaneta americana. The sequence is that of Alpha-latrotoxin associated low molecular weight protein 2 from Latrodectus hesperus (Western black widow spider).